A 669-amino-acid chain; its full sequence is MAINLLPPQLANQIAAGEVVERPASVVKELLENSLDAGATTIDIDIDKGGAKLIRIRDNGCGISRDDLKLALARHATSKISTLDDLEAIMSMGFRGEALASISSVSRLTLTSRTASQEEAWQAYAEGRDMTVAVKPAAHPVGSTVEVLDLFYNTPARRKFLRTEKTEFGHIDEVVRRIALSRFDVSINLTHNGKRVRQYRAAKETHQHHRRLSAICGNHFVDQAMQLTWEHGDLAIKGWVEHPLAPVQGSEIQYCYVNGRMMRDRLINHAIRQAYEGYLQGEQQPSYVLYLTVDPHQVDVNVHPAKHEVRFHESRLVHDFIYQAVLSVLRQVTEDTLSLDEEDNGALTATTFPENRQVAGENVFSQPYQAPVTSSTQKKSTGAYQGSAGKGLTDTQKSPQKTLDTRQFGESYQRTQGMLYQKMMQESASDVENKEKIPLFPPRPPLNLVDVGHTTNNNETNVISVVPRSVNASAAQTDYTFGRVLAIYQQKYALIESSQGLGLLALEEADFLLKCAQLLPENENLKPQPLLVPLKVTLSKDEINTFKQFQALISDFGIVIDISHGKATIHAVSLPLRQQNLPELLTKLLAYLATEKLCSKQQIGHWLAKQLSHESGVWSQAQAVGLLADIERLCPQYVRQPSKNLLQLIELQPVVAALNNERSKNANKT.

The disordered stretch occupies residues 361–409; that stretch reads ENVFSQPYQAPVTSSTQKKSTGAYQGSAGKGLTDTQKSPQKTLDTRQFG. 2 stretches are compositionally biased toward polar residues: residues 363–384 and 393–402; these read VFSQ…TGAY and TDTQKSPQKT.

Belongs to the DNA mismatch repair MutL/HexB family.

In terms of biological role, this protein is involved in the repair of mismatches in DNA. It is required for dam-dependent methyl-directed DNA mismatch repair. May act as a 'molecular matchmaker', a protein that promotes the formation of a stable complex between two or more DNA-binding proteins in an ATP-dependent manner without itself being part of a final effector complex. This is DNA mismatch repair protein MutL from Proteus mirabilis (strain HI4320).